Here is a 784-residue protein sequence, read N- to C-terminus: ent-copalyl diphosphate synthase 2, chloroplastic (784 aa).

A chloroplast-targeting transit peptide spans 1–57 (MSMTLFASVTRPGLPGPTALRFPETRHLFHSVTAFAASFSPSKSSVGSSQCNATTPP). Residue lysine 242 coordinates substrate. Positions 379 and 381 each coordinate Mg(2+). The DXDD motif signature appears at 379 to 382 (DIDD). Residue lysine 466 coordinates substrate.

Belongs to the terpene synthase family. Requires Mg(2+) as cofactor. Present in both leaves and flowers.

The protein resides in the plastid. It localises to the chloroplast. Its pathway is plant hormone biosynthesis; gibberellin biosynthesis. It participates in secondary metabolite biosynthesis; terpenoid biosynthesis. Functionally, involved in the biosynthesis of labdane-type diterpenoid including marrubiin and other labdane-related furanoid diterpenoids with potential applications as anti-diabetics, analgesics or vasorelaxants. May be involved in the conversion of geranylgeranyl diphosphate (GGPP) to ent-copalyl diphosphate (ent-CPP) and 8-hydroxycopalyl diphosphate (LPP, labda-13-en-8-ol diphosphate). The protein is ent-copalyl diphosphate synthase 2, chloroplastic of Marrubium vulgare (White horehound).